A 364-amino-acid chain; its full sequence is DNA polymerase IV (364 aa).

The UmuC domain maps to 14-198; that stretch reads IIHIDMDAFF…LPIEKFHGVG (185 aa). Mg(2+)-binding residues include Asp-18 and Asp-116. The active site involves Glu-117.

This sequence belongs to the DNA polymerase type-Y family. Monomer. Mg(2+) serves as cofactor.

It localises to the cytoplasm. It carries out the reaction DNA(n) + a 2'-deoxyribonucleoside 5'-triphosphate = DNA(n+1) + diphosphate. Functionally, poorly processive, error-prone DNA polymerase involved in untargeted mutagenesis. Copies undamaged DNA at stalled replication forks, which arise in vivo from mismatched or misaligned primer ends. These misaligned primers can be extended by PolIV. Exhibits no 3'-5' exonuclease (proofreading) activity. May be involved in translesional synthesis, in conjunction with the beta clamp from PolIII. In Streptococcus pyogenes serotype M2 (strain MGAS10270), this protein is DNA polymerase IV.